Consider the following 443-residue polypeptide: ATP synthase subunit b-delta (443 aa).

Residues 1-168 (MSTFIGQLIG…PSDAALDDAV (168 aa)) are ATP synthase subunit b. Residues 4–24 (FIGQLIGFAVIVFLLVRFVVP) traverse the membrane as a helical segment. Residues 169 to 443 (GSRMRSTSRE…LASAETQLPD (275 aa)) are ATP synthase subunit delta.

In the N-terminal section; belongs to the ATPase B chain family. The protein in the C-terminal section; belongs to the ATPase delta chain family. F-type ATPases have 2 components, F(1) - the catalytic core - and F(0) - the membrane proton channel. F(1) has five subunits: alpha(3), beta(3), gamma(1), delta(1), epsilon(1). F(0) has three main subunits: a(1), b(2) and c(10-14). The alpha and beta chains form an alternating ring which encloses part of the gamma chain. F(1) is attached to F(0) by a central stalk formed by the gamma and epsilon chains, while a peripheral stalk is formed by the delta and b chains.

It is found in the cell membrane. Functionally, f(1)F(0) ATP synthase produces ATP from ADP in the presence of a proton or sodium gradient. F-type ATPases consist of two structural domains, F(1) containing the extramembraneous catalytic core and F(0) containing the membrane proton channel, linked together by a central stalk and a peripheral stalk. During catalysis, ATP synthesis in the catalytic domain of F(1) is coupled via a rotary mechanism of the central stalk subunits to proton translocation. This fusion protein includes a component of the F(0) channel (subunit b) and of the F(1) subunit (subunit delta). Two copies of subunit b and one of delta together form the peripheral 'stator' stalk which links F(1) to F(0). This Mycobacterium sp. (strain JLS) protein is ATP synthase subunit b-delta (atpFH).